Reading from the N-terminus, the 367-residue chain is GMP synthase [glutamine-hydrolyzing] subunit B (367 aa).

The GMPS ATP-PPase domain occupies 2 to 190; it reads FDPASFVKEI…LKLPKEISER (189 aa). 29–35 provides a ligand contact to ATP; the sequence is SGGVDST.

Heterodimer composed of a glutamine amidotransferase subunit (A) and a GMP-binding subunit (B).

The enzyme catalyses XMP + L-glutamine + ATP + H2O = GMP + L-glutamate + AMP + diphosphate + 2 H(+). It participates in purine metabolism; GMP biosynthesis; GMP from XMP (L-Gln route): step 1/1. Its function is as follows. Catalyzes the synthesis of GMP from XMP. The sequence is that of GMP synthase [glutamine-hydrolyzing] subunit B from Saccharolobus islandicus (strain M.16.27) (Sulfolobus islandicus).